We begin with the raw amino-acid sequence, 432 residues long: Pachytene checkpoint protein 2 homolog (432 aa).

179 to 186 (GPPGTGKT) is a binding site for ATP.

The protein belongs to the AAA ATPase family. PCH2 subfamily.

Its function is as follows. Plays a key role in chromosome recombination and chromosome structure development during meiosis. Required at early steps in meiotic recombination that leads to non-crossovers pathways. Also needed for efficient completion of homologous synapsis by influencing crossover distribution along the chromosomes affecting both crossovers and non-crossovers pathways. In Xenopus tropicalis (Western clawed frog), this protein is Pachytene checkpoint protein 2 homolog (trip13).